The sequence spans 699 residues: MAREYKIEDYRNFGIMAHIDAGKTTTTERILYYTGKSHKIGEVHDGAATMDWMEQEQERGITITSAATTTYWKGRDGKMRRFNIIDTPGHVDFTIEVERSLRVLDGAIALLDANAGVEPQTETVWRQAEKYNVPRMIFCNKMDKTGADFYRSVEMIKTRLGATAVVMQLPIGAETEFKGVVDLIEMNALVWRDESLGAAWDVTEIPDDLKEKAVEYREKLIETVVEIDEQAMEDYLNGIMPDNDKIRALVRQGTIEVKFHPMFCGTAFKNKGVQPLLDAVCEYLPSPLDIPAIKGIDVKTDGEIERHPDDAEPLSMLAFKIMNDPFVGSLTFCRIYSGKLEKGASVMNTVKEKRERVGRMLQMHSNSREDIEEAFAGDIVALAGLKESTTGDTLCDPLNQVILERMEFPEPVIQIAIEPKTKGDQEKMGLALNRLAAEDPSFRVKTDQESGQTIIAGMGELHLDIIVDRMRREFKVEATVGAPQVAYRETITRQHEEDYTHKKQSGGTGQFARVKIIFEPNPEGDEFKFDSKIVGGSVPKEYIPGVQKGIESVLSSGPLAGFPMLGVKATLIDGAYHDVDSSVLAFEIASRACFREAAKKAGAQLLEPMMKVEVVTPEDYVGDVIGDLNSRRGQIQGQESRGIAVVINAHVPLANMFKYVDNLRSMSQGRAQYSMVFDHYSPVPSNVAAEIQAKYSGQK.

Positions 8–288 (EDYRNFGIMA…AVCEYLPSPL (281 aa)) constitute a tr-type G domain. Residues 17–24 (AHIDAGKT), 86–90 (DTPGH), and 140–143 (NKMD) contribute to the GTP site.

It belongs to the TRAFAC class translation factor GTPase superfamily. Classic translation factor GTPase family. EF-G/EF-2 subfamily.

The protein localises to the cytoplasm. Its function is as follows. Catalyzes the GTP-dependent ribosomal translocation step during translation elongation. During this step, the ribosome changes from the pre-translocational (PRE) to the post-translocational (POST) state as the newly formed A-site-bound peptidyl-tRNA and P-site-bound deacylated tRNA move to the P and E sites, respectively. Catalyzes the coordinated movement of the two tRNA molecules, the mRNA and conformational changes in the ribosome. The sequence is that of Elongation factor G from Allorhizobium ampelinum (strain ATCC BAA-846 / DSM 112012 / S4) (Agrobacterium vitis (strain S4)).